The following is a 510-amino-acid chain: Cytochrome P450 52C2 (510 aa).

Cys458 contributes to the heme binding site.

It belongs to the cytochrome P450 family. Heme is required as a cofactor.

It is found in the membrane. In terms of biological role, together with an NADPH cytochrome P450 the enzyme system catalyzes the terminal hydroxylation as the first step in the assimilation of alkanes and fatty acids. The chain is Cytochrome P450 52C2 (CYP52C2) from Candida maltosa (Yeast).